The sequence spans 95 residues: Small ribosomal subunit protein bS6 (95 aa).

It belongs to the bacterial ribosomal protein bS6 family.

Functionally, binds together with bS18 to 16S ribosomal RNA. The chain is Small ribosomal subunit protein bS6 from Onion yellows phytoplasma (strain OY-M).